Here is a 243-residue protein sequence, read N- to C-terminus: 1-(5-phosphoribosyl)-5-[(5-phosphoribosylamino)methylideneamino] imidazole-4-carboxamide isomerase (243 aa).

Asp14 acts as the Proton acceptor in catalysis. Catalysis depends on Asp135, which acts as the Proton donor.

It belongs to the HisA/HisF family.

The protein localises to the cytoplasm. The catalysed reaction is 1-(5-phospho-beta-D-ribosyl)-5-[(5-phospho-beta-D-ribosylamino)methylideneamino]imidazole-4-carboxamide = 5-[(5-phospho-1-deoxy-D-ribulos-1-ylimino)methylamino]-1-(5-phospho-beta-D-ribosyl)imidazole-4-carboxamide. The protein operates within amino-acid biosynthesis; L-histidine biosynthesis; L-histidine from 5-phospho-alpha-D-ribose 1-diphosphate: step 4/9. This is 1-(5-phosphoribosyl)-5-[(5-phosphoribosylamino)methylideneamino] imidazole-4-carboxamide isomerase from Rubrobacter xylanophilus (strain DSM 9941 / JCM 11954 / NBRC 16129 / PRD-1).